A 127-amino-acid polypeptide reads, in one-letter code: MKVLLELLLGYSVHILAHELPDLPRTQHPPKSELSYWCTYVPQCDFCWDCQDGICKNKITESHFIDSNHSIVNCRVFRDSKTQSCLYEISSKMPNHFSMECLHPRPYTGNEIFMQTWGGGVTINNYL.

The signal sequence occupies residues 1 to 17 (MKVLLELLLGYSVHILA).

The protein belongs to the asfivirus MGF 110 family.

Plays a role in virus cell tropism, and may be required for efficient virus replication in macrophages. This chain is Protein MGF 110-14L, found in Ornithodoros (relapsing fever ticks).